Consider the following 429-residue polypeptide: Adenylosuccinate synthetase (429 aa).

GTP contacts are provided by residues 12–18 (GDEGKGK) and 40–42 (GHT). The active-site Proton acceptor is the D13. The Mg(2+) site is built by D13 and G40. IMP is bound by residues 13-16 (DEGK), 38-41 (NAGH), T129, R143, Q223, T238, and R302. The active-site Proton donor is H41. 298 to 304 (TVTGRPR) provides a ligand contact to substrate. GTP contacts are provided by residues R304, 330 to 332 (KLD), and 412 to 414 (STS).

It belongs to the adenylosuccinate synthetase family. In terms of assembly, homodimer. Requires Mg(2+) as cofactor.

It is found in the cytoplasm. The enzyme catalyses IMP + L-aspartate + GTP = N(6)-(1,2-dicarboxyethyl)-AMP + GDP + phosphate + 2 H(+). It participates in purine metabolism; AMP biosynthesis via de novo pathway; AMP from IMP: step 1/2. Plays an important role in the de novo pathway of purine nucleotide biosynthesis. Catalyzes the first committed step in the biosynthesis of AMP from IMP. The protein is Adenylosuccinate synthetase of Rhodospirillum rubrum (strain ATCC 11170 / ATH 1.1.1 / DSM 467 / LMG 4362 / NCIMB 8255 / S1).